The primary structure comprises 272 residues: Ribonuclease HII (272 aa).

Positions 87 to 272 constitute an RNase H type-2 domain; the sequence is KYVAGVDEVG…HRMSFLKNIL (186 aa). Positions 93, 94, and 188 each coordinate a divalent metal cation.

This sequence belongs to the RNase HII family. Requires Mn(2+) as cofactor. Mg(2+) is required as a cofactor.

It is found in the cytoplasm. The catalysed reaction is Endonucleolytic cleavage to 5'-phosphomonoester.. Its function is as follows. Endonuclease that specifically degrades the RNA of RNA-DNA hybrids. The sequence is that of Ribonuclease HII from Clostridium perfringens (strain SM101 / Type A).